Reading from the N-terminus, the 368-residue chain is MPNAIVAAEQYREIFLNQHPIMDVRAPIEFTRGAFPNSTNLPLMLDSEREKVGTCYKQSGQQAAIALGHSLVNGPIKQQRIEAWTSYVKANPNAYLYCFRGGLRSQLTQQWLKEAGVEVPYIQGGYKAMRQYLIGVIEAAPIQQPLLSLSGMTGCGKTDFLLQRKEAVDLEGIANHRGSSFGKNIDPQPTQINFENQLAIALLQHQTSGVACLLLEDESFLIGRSALPQTFYNAMQAANVLVLEESDDARLERLRNEYVHKMYSGFCERLGPEAGFAAFSDYLLQSLVSIRKRLGGKQHQELQDLMQQALDQQINQNDTSLHLVWINLLLHKYYDPMYLYQLDKKSERVLFKGSHQAMHEWLDSYQTR.

A Rhodanese domain is found at 15–138 (FLNQHPIMDV…MRQYLIGVIE (124 aa)). The S-selanylcysteine intermediate role is filled by Cys-98.

Belongs to the SelU family. In terms of assembly, monomer.

The enzyme catalyses 5-methylaminomethyl-2-thiouridine(34) in tRNA + selenophosphate + (2E)-geranyl diphosphate + H2O + H(+) = 5-methylaminomethyl-2-selenouridine(34) in tRNA + (2E)-thiogeraniol + phosphate + diphosphate. The catalysed reaction is 5-methylaminomethyl-2-thiouridine(34) in tRNA + (2E)-geranyl diphosphate = 5-methylaminomethyl-S-(2E)-geranyl-thiouridine(34) in tRNA + diphosphate. It carries out the reaction 5-methylaminomethyl-S-(2E)-geranyl-thiouridine(34) in tRNA + selenophosphate + H(+) = 5-methylaminomethyl-2-(Se-phospho)selenouridine(34) in tRNA + (2E)-thiogeraniol. It catalyses the reaction 5-methylaminomethyl-2-(Se-phospho)selenouridine(34) in tRNA + H2O = 5-methylaminomethyl-2-selenouridine(34) in tRNA + phosphate. In terms of biological role, involved in the post-transcriptional modification of the uridine at the wobble position (U34) of tRNA(Lys), tRNA(Glu) and tRNA(Gln). Catalyzes the conversion of 2-thiouridine (S2U-RNA) to 2-selenouridine (Se2U-RNA). Acts in a two-step process involving geranylation of 2-thiouridine (S2U) to S-geranyl-2-thiouridine (geS2U) and subsequent selenation of the latter derivative to 2-selenouridine (Se2U) in the tRNA chain. This chain is tRNA 2-selenouridine synthase, found in Shewanella baltica (strain OS185).